The chain runs to 178 residues: ATP synthase subunit delta (178 aa).

It belongs to the ATPase delta chain family. In terms of assembly, F-type ATPases have 2 components, F(1) - the catalytic core - and F(0) - the membrane proton channel. F(1) has five subunits: alpha(3), beta(3), gamma(1), delta(1), epsilon(1). F(0) has three main subunits: a(1), b(2) and c(10-14). The alpha and beta chains form an alternating ring which encloses part of the gamma chain. F(1) is attached to F(0) by a central stalk formed by the gamma and epsilon chains, while a peripheral stalk is formed by the delta and b chains.

Its subcellular location is the cell inner membrane. F(1)F(0) ATP synthase produces ATP from ADP in the presence of a proton or sodium gradient. F-type ATPases consist of two structural domains, F(1) containing the extramembraneous catalytic core and F(0) containing the membrane proton channel, linked together by a central stalk and a peripheral stalk. During catalysis, ATP synthesis in the catalytic domain of F(1) is coupled via a rotary mechanism of the central stalk subunits to proton translocation. Its function is as follows. This protein is part of the stalk that links CF(0) to CF(1). It either transmits conformational changes from CF(0) to CF(1) or is implicated in proton conduction. The sequence is that of ATP synthase subunit delta from Methylococcus capsulatus (strain ATCC 33009 / NCIMB 11132 / Bath).